A 155-amino-acid chain; its full sequence is Ribonuclease H (155 aa).

The RNase H type-1 domain maps to Met-1 to Asp-143. Mg(2+) is bound by residues Asp-9, Glu-47, Asp-69, and Asp-135.

The protein belongs to the RNase H family. As to quaternary structure, monomer. The cofactor is Mg(2+).

It localises to the cytoplasm. The enzyme catalyses Endonucleolytic cleavage to 5'-phosphomonoester.. Endonuclease that specifically degrades the RNA of RNA-DNA hybrids. This is Ribonuclease H from Verminephrobacter eiseniae (strain EF01-2).